The primary structure comprises 523 residues: 2-isopropylmalate synthase (523 aa).

The Pyruvate carboxyltransferase domain maps to 5-267 (VIIFDTTLRD…HTNINHHEIW (263 aa)). Asp-14, His-202, His-204, and Asn-238 together coordinate Mn(2+). A regulatory domain region spans residues 392-523 (RLDYFSVQSG…HNKENNKEIV (132 aa)).

Belongs to the alpha-IPM synthase/homocitrate synthase family. LeuA type 1 subfamily. As to quaternary structure, homodimer. It depends on Mn(2+) as a cofactor.

The protein localises to the cytoplasm. It carries out the reaction 3-methyl-2-oxobutanoate + acetyl-CoA + H2O = (2S)-2-isopropylmalate + CoA + H(+). The protein operates within amino-acid biosynthesis; L-leucine biosynthesis; L-leucine from 3-methyl-2-oxobutanoate: step 1/4. Functionally, catalyzes the condensation of the acetyl group of acetyl-CoA with 3-methyl-2-oxobutanoate (2-ketoisovalerate) to form 3-carboxy-3-hydroxy-4-methylpentanoate (2-isopropylmalate). This is 2-isopropylmalate synthase from Salmonella arizonae (strain ATCC BAA-731 / CDC346-86 / RSK2980).